Reading from the N-terminus, the 356-residue chain is Uroporphyrinogen decarboxylase (356 aa).

Substrate-binding positions include R27 to R31, D77, Y154, S209, and H327.

This sequence belongs to the uroporphyrinogen decarboxylase family. As to quaternary structure, homodimer.

Its subcellular location is the cytoplasm. It catalyses the reaction uroporphyrinogen III + 4 H(+) = coproporphyrinogen III + 4 CO2. It participates in porphyrin-containing compound metabolism; protoporphyrin-IX biosynthesis; coproporphyrinogen-III from 5-aminolevulinate: step 4/4. Functionally, catalyzes the decarboxylation of four acetate groups of uroporphyrinogen-III to yield coproporphyrinogen-III. The polypeptide is Uroporphyrinogen decarboxylase (Aromatoleum aromaticum (strain DSM 19018 / LMG 30748 / EbN1) (Azoarcus sp. (strain EbN1))).